Here is a 1657-residue protein sequence, read N- to C-terminus: MSAAEEVDGLGVVRPHYGSVLDNERLTAEEMDERRRQNVAYEYLCHLEEAKRWMEACLGEDLPPTTELEEGLRNGVYLAKLGNFFSPKVVSLKKIYDREQTRYKATGLHFRHTDNVIQWLNAMDEIGLPKIFYPETTDIYDRKNMPRCIYCIHALSLYLFKLGLAPQIQDLYGKVDFTEEEINNMKIELEKYGIQMPAFSKIGGILANELSVDEAALHAAVIAINEAIDRRVAADTFTALKNPNAMLVNLEEGLAPTYQDVLYQAKQDKMTNAKNRTENSDRERDVYEELLTQAEIQGNVNKVNTSSALANISLALEQGCAVTLLKALQSLALGLRGLQTQNSDWYMKQLQSDLQQKRQSGQTDPLQKEEVQAGVDAANSAAQQYQRRLAAVAAINAAIQKGIAEKTVLELMNPEAQLPQVYPFAADLYQKELATLQQQSPEHSLTHPELTVAVEMLSSVALINRALESGDMTTVWKQLSSSVTGLTNIEEENCQRYLDELMKLKAQAHAENNAFITWNDIQACVDHVNLVVHEEHERILAIGLINEALDEGDAQKTLQALQIPAAKLEGVLAEVAQHYQDTLIRAKREKAQETQDESAVLWLDEIQGGIWQSNKDTQEAQRFALGISAINEAVDSGDVGRTLSALRSPDVGLYGVIPECGETYQSDLAEAKKKRLAAGDNNSKWVKHWVKGGYHYYHNLETQAGGWAEPPDFVQNSVQLSREEIQSSISGVTAAYNREQLWLANEGLITKLQACCRGYLVRQEFRSRMNFLKKQIPAITCIQSQWRGYKQKKAYQDRLAYLHSHKDEVVKIQSLARMHQARKRYRDRLQYFRDHINDIIKIQAFIRANKARDDYKTLINAEDPPMIVVRKFVHLLDQSDQDFQEELDLMKMREEVITLIRSNQQLENDLNLMDIKIGLLVKNKITLQDVVSHSKKLTKKNKEQLSDMMMINKQKGGLKALSKEKREKLEAYQHLFYLLQTNPTYLAKLIFQMPQNKSTKFMDSVIFTLYNYASNQREEYLLLRLFQTALQEEIKSKVDQIQEIVTGNPTVIKMVVSFNRGARGQNALRQILAPVVKEIMDDKSLNIKTDPVDIYKSWVNQMESQTGEASKLPYDVTPEQALSHEEVKTRLDNSIRNMRAVTDKFLSAIVSSVDKIPYGMRFIAKVLKDSLHEKFPDAGEDELLKIIGNLLYYRYMNPAIVAPDAFDIIDLSAGGQLTTDQRRNLGSIAKMLQHAASNKMFLGDNAHLSIINEYLSQSYQKFRRFFQVACDVPELQDKFNVDEYSDLVTLTKPVIYISIGEIINTHTLLLDHQDAIAPEHNDPIHELLDDLGEVPTIESLIGESCGNSNDPNKEALAKTEVSLTLTNKFDVPGDENAEMDARTILLNTKRLIVDVIRFQPGETLTEILETPATNEQEAEHQRAMQRRAIRDAKTPDKMKKSKPMKEDNNLSLQEKKEKIQTGLKKLTELGTVDPKNRYQELINDIAKDIRNQRRYRQRRKAELVKLQQTYSALNSKATFYGEQVDYYKSYIKTCLDNLASKGKVSKKPREMKGKKSKKISLKYTAARLHEKGVLLEIEDLQANQFKNVIFEIGPTEEVGDFEVKAKFMGVQMETFMLHYQDLLQLQYEGVAVMKLFDRAKVNVNLLIFLLNKKFYGK.

Position 2 is an N-acetylserine (S2). S2 carries the post-translational modification Phosphoserine. Residues 44-159 (LCHLEEAKRW…YCIHALSLYL (116 aa)) form the Calponin-homology (CH) domain. Y172 carries the post-translational modification Phosphotyrosine. S330 carries the post-translational modification Phosphoserine. The WW domain occupies 685–710 (WVKHWVKGGYHYYHNLETQAGGWAEP). IQ domains lie at 745-774 (NEGLITKLQACCRGYLVRQEFRSRMNFLKK), 775-804 (QIPAITCIQSQWRGYKQKKAYQDRLAYLHS), 805-834 (HKDEVVKIQSLARMHQARKRYRDRLQYFRD), and 835-864 (HINDIIKIQAFIRANKARDDYKTLINAEDP). Residues 956–1274 (GGLKALSKEK…FFQVACDVPE (319 aa)) are C1. Positions 1020-1269 (YLLLRLFQTA…QKFRRFFQVA (250 aa)) constitute a Ras-GAP domain. The tract at residues 1276 to 1657 (QDKFNVDEYS…FLLNKKFYGK (382 aa)) is C2. The residue at position 1441 (S1441) is a Phosphoserine.

In terms of assembly, interacts with CDC42; the interaction is demonstrated with IQGAP1 in GTP-bound and in nucleotide-free state. Interacts with RAC1. Does not interact with RHOA. Interacts with TSG101. Interacts with PAK6. Interacts with SASH1. Interacts with PJVK. Interacts with SLC26A4. This interaction enhances the chloride-bicarbonate exchange activity of SLC26A4. Interacts with SVEP1. Interacts with ILK; the interaction is required for localization of IQGAP to the cell cortex. (Microbial infection) In case of infection, interacts with S.typhimurium protein sseI. Expressed in the kidney (at protein level).

It localises to the cell membrane. Its subcellular location is the nucleus. The protein resides in the cytoplasm. It is found in the cell cortex. The protein localises to the apical cell membrane. It localises to the basolateral cell membrane. Plays a crucial role in regulating the dynamics and assembly of the actin cytoskeleton. Recruited to the cell cortex by interaction with ILK which allows it to cooperate with its effector DIAPH1 to locally stabilize microtubules and allow stable insertion of caveolae into the plasma membrane. Binds to activated CDC42 but does not stimulate its GTPase activity. Associates with calmodulin. May promote neurite outgrowth. May play a possible role in cell cycle regulation by contributing to cell cycle progression after DNA replication arrest. In Mus musculus (Mouse), this protein is Ras GTPase-activating-like protein IQGAP1 (Iqgap1).